A 406-amino-acid polypeptide reads, in one-letter code: MMEGLDDGPDFLSEEDRGLKAINVDLQSDAALQVDISDALSERDKVKFTVHTKSSLPNFKQNEFSVVRQHEEFIWLHDSFVENEDYAGYIIPPAPPRPDFDASREKLQKLGEGEGSMTKEEFTKMKQELEAEYLAIFKKTVAMHEVFLCRVAAHPILRKDLNFHVFLEYNQDLSVRGKNKKEKLEDFFKNMVKSADGVIVSGVKDVDDFFEHERTFLLEYHNRVKDASAKSDRMTRSHKSAADDYNRIGSSLYALGTQDSTDICKFFLKVSELFDKTRKIEARVSADEDLKLSDLLKYYLRESQAAKDLLYRRSRSLVDYENANKALDKARAKNKDVLQAETSQQLCCQKFEKISESAKQELIDFKTRRVAAFRKNLVELAELELKHAKGNLQLLQNCLAVLNGDT.

Met1 bears the N-acetylmethionine mark. At Met2 the chain carries N-acetylmethionine; in Sorting nexin-6, N-terminally processed. The segment at 2–179 is interaction with PIM1; that stretch reads MEGLDDGPDF…NQDLSVRGKN (178 aa). The PX domain maps to 26-173; sequence LQSDAALQVD…HVFLEYNQDL (148 aa). A 1,2-diacyl-sn-glycero-3-phospho-(1D-myo-inositol-4,5-bisphosphate)-binding positions include 41–47, 100–106, and 114–117; these read SERDKVK, FDASREK, and EGSM. A phosphoserine mark is found at Ser116 and Ser194. Residues 182-199 are membrane-binding amphipathic helix; it reads EKLEDFFKNMVKSADGVI. One can recognise a BAR domain in the interval 203–406; the sequence is VKDVDDFFEH…NCLAVLNGDT (204 aa).

It belongs to the sorting nexin family. Forms heterodimers with BAR domain-containing sorting nexins SNX1 and SNX2. The heterodimers are proposed to self-assemble into helical arrays on the membrane to stabilize and expand local membrane curvature underlying endosomal tubule formation. Thought to be a component of the originally described retromer complex (also called SNX-BAR retromer) which is a pentamer containing the heterotrimeric retromer cargo-selective complex (CSC), also described as vacuolar protein sorting subcomplex (VPS), and a heterodimeric membrane-deforming subcomplex formed between SNX1 or SNX2 and SNX5 or SNX6 (also called SNX-BAR subcomplex); the respective CSC and SNX-BAR subcomplexes associate with low affinity. Interacts with SNX1, SNX2, VPS26A, VPS29, VPS35, TGFB receptors, BACE1, BRMS1, PIP5K1C. Interacts with DCTN1; the association with DCTN1 is involved in movement of retromer-c ontaining vesicles toward the TGN. Interacts with PIM1; translocating SNX6 to the nucleus. Interacts with CDKN1B and GIT1. In vitro phosphorylated by PIM1; not affecting PIM1-dependent nuclear translocation.

It localises to the early endosome membrane. The protein localises to the cytoplasmic vesicle. It is found in the cytoplasm. Its subcellular location is the nucleus. Its function is as follows. Involved in several stages of intracellular trafficking. Interacts with membranes phosphatidylinositol 3,4-bisphosphate and/or phosphatidylinositol 4,5-bisphosphate. Acts in part as component of the retromer membrane-deforming SNX-BAR subcomplex. The SNX-BAR retromer mediates retrograde transport of cargo proteins from endosomes to the trans-Golgi network (TGN) and is involved in endosome-to-plasma membrane transport for cargo protein recycling. The SNX-BAR subcomplex functions to deform the donor membrane into a tubular profile called endosome-to-TGN transport carrier (ETC). Does not have in vitro vesicle-to-membrane remodeling activity. Involved in retrograde endosome-to-TGN transport of lysosomal enzyme receptor IGF2R. May function as link between transport vesicles and dynactin. Negatively regulates retrograde transport of BACE1 from the cell surface to the trans-Golgi network. Involved in E-cadherin sorting and degradation; inhibits PIP5K1C-mediated E-cadherin degradation. In association with GIT1 involved in EGFR degradation. Promotes lysosomal degradation of CDKN1B. May contribute to transcription regulation. The chain is Sorting nexin-6 (SNX6) from Pongo abelii (Sumatran orangutan).